A 720-amino-acid polypeptide reads, in one-letter code: Collectin-12 (720 aa).

At 1–37 (MKDDFNDEEEVQSFGYKRFGIQEGNECTKCKNDWALR) the chain is on the cytoplasmic side. The helical; Signal-anchor for type II membrane protein transmembrane segment at 38–58 (VAIALLYVLCALLTIAVAVLG) threads the bilayer. Over 59 to 720 (YKVVQRMDNV…RTNESKVPVL (662 aa)) the chain is Extracellular. Coiled-coil stretches lie at residues 95 to 120 (EKSENATSELHSFKLEFQTLQKQLSD), 216 to 267 (ISSL…LAAN), and 377 to 408 (LHGLNNSVAETRAESTELKAQQEELAVRLDKE). The interval 433–576 (FTILQGPPGP…GPPGLPGLPA (144 aa)) is disordered. 2 Collagen-like domains span residues 444–503 (GPRG…PGPK) and 510–569 (GRQG…PGPP). The segment covering 460–479 (PKGEKGEKGAPGDAGPKGEK) has biased composition (basic and acidic residues). The segment covering 488 to 503 (PGLKGPPGSRGSPGPK) has biased composition (low complexity). Over residues 504–513 (GSRGSGGRQG) the composition is skewed to gly residues. Positions 527–560 (PGRDGQPGPTGPQGPQGLRGPAGPAGLEGARGPV) are enriched in low complexity. Pro residues predominate over residues 562–576 (PIGPPGPPGLPGLPA). Intrachain disulfides connect cysteine 604–cysteine 615, cysteine 634–cysteine 709, and cysteine 687–cysteine 701. The C-type lectin domain occupies 611–710 (FREQCYHFSA…CTERIGFICE (100 aa)). Ca(2+) contacts are provided by isoleucine 643, asparagine 645, and glutamate 649. A carbohydrate-binding residues include lysine 670, glutamine 673, and aspartate 675. Positions 673, 675, 676, 685, 686, 697, 698, and 710 each coordinate Ca(2+). Position 685 (glutamate 685) interacts with a carbohydrate. 2 residues coordinate a carbohydrate: asparagine 697 and aspartate 698.

The protein resides in the membrane. Functionally, scavenger receptor that displays several functions associated with host defense. Binds to carbohydrates. This Danio rerio (Zebrafish) protein is Collectin-12 (colec12).